Reading from the N-terminus, the 396-residue chain is Putative N(4)-(beta-N-acetylglucosaminyl)-L-asparaginase GG24090 (396 aa).

The N-terminal stretch at methionine 1–alanine 23 is a signal peptide. Intrachain disulfides connect cysteine 100–cysteine 105 and cysteine 199–cysteine 215. Catalysis depends on threonine 246, which acts as the Nucleophile. Substrate contacts are provided by residues arginine 274–aspartate 277 and threonine 297–glycine 300. A disulfide bridge links cysteine 357 with cysteine 384.

Belongs to the Ntn-hydrolase family. Heterotetramer of two alpha and two beta chains arranged as a dimer of alpha/beta heterodimers. Cleaved into an alpha and beta chain by autocatalysis; this activates the enzyme. The N-terminal residue of the beta subunit is responsible for the nucleophile hydrolase activity.

It carries out the reaction N(4)-(beta-N-acetyl-D-glucosaminyl)-L-asparagine + H2O = N-acetyl-beta-D-glucosaminylamine + L-aspartate + H(+). Cleaves the GlcNAc-Asn bond which joins oligosaccharides to the peptide of asparagine-linked glycoproteins. The chain is Putative N(4)-(beta-N-acetylglucosaminyl)-L-asparaginase GG24090 from Drosophila erecta (Fruit fly).